The primary structure comprises 765 residues: Probable ATP-dependent RNA helicase DDX27 (765 aa).

Residues serine 23, serine 25, and serine 48 each carry the phosphoserine modification. Residues leucine 43–threonine 63 show a composition bias toward acidic residues. 2 disordered regions span residues leucine 43–alanine 83 and lysine 111–aspartate 179. The short motif at phenylalanine 55–phenylalanine 57 is the Required for interaction with the PEBOW complex element. The span at glutamate 129–aspartate 156 shows a compositional bias: basic and acidic residues. 2 positions are modified to phosphoserine: serine 135 and serine 146. Residues threonine 157–glutamate 172 are compositionally biased toward acidic residues. The Nuclear localization signal signature appears at lysine 164 to lysine 169. The Q motif signature appears at leucine 187–lysine 215. Positions isoleucine 218 to isoleucine 392 constitute a Helicase ATP-binding domain. Alanine 231–threonine 238 lines the ATP pocket. The short motif at aspartate 340–aspartate 343 is the DEAD box element. The region spanning leucine 426 to isoleucine 572 is the Helicase C-terminal domain. Residues valine 716–serine 725 are compositionally biased toward basic residues.

This sequence belongs to the DEAD box helicase family. DDX27/DRS1 subfamily. As to quaternary structure, associates with PeBoW complex, composed of BOP1, PES1 and WDR12. Interacts directly with BOP1 and PES1.

The protein localises to the nucleus. It is found in the nucleolus. The protein resides in the chromosome. The catalysed reaction is ATP + H2O = ADP + phosphate + H(+). Probable ATP-dependent RNA helicase. Component of the nucleolar ribosomal RNA (rRNA) processing machinery that regulates 3' end formation of ribosomal 47S rRNA. The sequence is that of Probable ATP-dependent RNA helicase DDX27 (DDX27) from Homo sapiens (Human).